The chain runs to 196 residues: Dephospho-CoA kinase (196 aa).

In terms of domain architecture, DPCK spans 6-196 (AIALTGGIGT…QVERFLKTLL (191 aa)). 14–19 (GTGKST) provides a ligand contact to ATP.

Belongs to the CoaE family.

The protein localises to the cytoplasm. It catalyses the reaction 3'-dephospho-CoA + ATP = ADP + CoA + H(+). The protein operates within cofactor biosynthesis; coenzyme A biosynthesis; CoA from (R)-pantothenate: step 5/5. Its function is as follows. Catalyzes the phosphorylation of the 3'-hydroxyl group of dephosphocoenzyme A to form coenzyme A. This is Dephospho-CoA kinase from Helicobacter pylori (strain ATCC 700392 / 26695) (Campylobacter pylori).